The chain runs to 214 residues: Adenylate kinase (214 aa).

10 to 15 (GAGKGT) provides a ligand contact to ATP. Residues 30–59 (STGDMLRAAVKAQSELGRQAKALMDAGKLV) are NMP. Residues Thr31, Arg36, 57–59 (KLV), 85–88 (GFPR), and Gln92 each bind AMP. Residues 122–159 (GRRVHAPSGRVYHVKFNPPKQEGKDDVTGELLTSRKDD) form an LID region. ATP contacts are provided by residues Arg123 and 132 to 133 (VY). AMP contacts are provided by Arg156 and Arg167. Residue Arg200 coordinates ATP.

The protein belongs to the adenylate kinase family. As to quaternary structure, monomer.

The protein resides in the cytoplasm. The enzyme catalyses AMP + ATP = 2 ADP. The protein operates within purine metabolism; AMP biosynthesis via salvage pathway; AMP from ADP: step 1/1. In terms of biological role, catalyzes the reversible transfer of the terminal phosphate group between ATP and AMP. Plays an important role in cellular energy homeostasis and in adenine nucleotide metabolism. The protein is Adenylate kinase of Sodalis glossinidius (strain morsitans).